We begin with the raw amino-acid sequence, 295 residues long: Putative fused nickel transport protein NikMN (295 aa).

8 consecutive transmembrane segments (helical) span residues 8 to 28 (LDLSIAGLFYILSIAVLGYSI), 39 to 59 (LFGIVAAAIFAAQMLNWPIPG), 70 to 90 (LAGILLGPYAGALAMAVVLTI), 98 to 118 (GGITALGANVWNMAIVNVFVG), 135 to 155 (FIAGWIGITLAAIFAGIEIGI), 175 to 195 (ALLGLVEGTITAGVVSYIAAA), 211 to 231 (LAVIAAMIAVSPLFAYAAELV), and 268 to 288 (AGTLIAGIVGTVIVLALGFAL).

The protein belongs to the CbiM family. NikM subfamily.

Its subcellular location is the cell membrane. Functionally, may be involved in nickel transport. This chain is Putative fused nickel transport protein NikMN, found in Archaeoglobus fulgidus (strain ATCC 49558 / DSM 4304 / JCM 9628 / NBRC 100126 / VC-16).